A 459-amino-acid polypeptide reads, in one-letter code: Glutamyl-tRNA reductase (459 aa).

Residues 49 to 52 (TCNR), S109, 114 to 116 (ETQ), and Q120 contribute to the substrate site. C50 functions as the Nucleophile in the catalytic mechanism. 189 to 194 (GAGKMG) is an NADP(+) binding site.

Belongs to the glutamyl-tRNA reductase family. As to quaternary structure, homodimer.

The catalysed reaction is (S)-4-amino-5-oxopentanoate + tRNA(Glu) + NADP(+) = L-glutamyl-tRNA(Glu) + NADPH + H(+). The protein operates within porphyrin-containing compound metabolism; protoporphyrin-IX biosynthesis; 5-aminolevulinate from L-glutamyl-tRNA(Glu): step 1/2. In terms of biological role, catalyzes the NADPH-dependent reduction of glutamyl-tRNA(Glu) to glutamate 1-semialdehyde (GSA). This chain is Glutamyl-tRNA reductase, found in Halalkalibacterium halodurans (strain ATCC BAA-125 / DSM 18197 / FERM 7344 / JCM 9153 / C-125) (Bacillus halodurans).